We begin with the raw amino-acid sequence, 360 residues long: UDP-arabinopyranose mutase 2 (360 aa).

An N-acetylvaline modification is found at Val2. Residues 110 to 112 (DDD) carry the DXD motif motif. N-linked (Glc...) arginine glycosylation is present at Arg158.

This sequence belongs to the RGP family. Heteromers with RGP1, RGP4 and RGP5. Requires Mn(2+) as cofactor. Mg(2+) is required as a cofactor. In terms of processing, reversibly glycosylated in vitro by UDP-glucose, UDP-xylose and UDP-galactose, but not UDP-mannose. Predominantly expressed in shoot and root apical meristems. Expressed in epidermal cells of leaves, inflorescence stems and seed coat. Expressed in pollen.

The protein localises to the cytoplasm. The protein resides in the cytosol. It is found in the golgi apparatus. The enzyme catalyses UDP-beta-L-arabinofuranose = UDP-beta-L-arabinopyranose. Its function is as follows. UDP-L-arabinose mutase involved in the biosynthesis of cell wall non-cellulosic polysaccharides. Catalyzes the interconvertion of UDP-L-arabinopyranose (UDP-Arap) and UDP-L-arabinofuranose (UDP-Araf) in vitro. Preferentially catalyzes the formation of UDP-Arap from UDP-Araf. At thermodynamic equilibrium in vitro the ratio of the pyranose form over the furanose form is 95:5. Is not active on other UDP-sugars (UDP-Gal, UDP-Xyl, UDP-Glc, GDP-Man and GDP-Fuc). Functions redundantly with RGP2 and is essential for proper cell walls and pollen development. Probably involved in the formation of the pectocellulosic cell wall layer intine. Is probably active as heteromer in vivo. The polypeptide is UDP-arabinopyranose mutase 2 (Arabidopsis thaliana (Mouse-ear cress)).